Here is a 1153-residue protein sequence, read N- to C-terminus: PPi-type phosphoenolpyruvate carboxykinase 2 (1153 aa).

Positions 1085–1131 form a coiled coil; it reads RQKLEVAKLNKDLAYLNKTIAEKPRLVETLNKQIAAVKEELQYVSSE.

Belongs to the PPi-type phosphoenolpyruvate carboxykinase family. Monomer and trimer; forms heterotrimers with PEPCK1 and PEPCK3.

Its subcellular location is the cytoplasm. It localises to the cytosol. The enzyme catalyses oxaloacetate + diphosphate = phosphoenolpyruvate + phosphate + CO2. In terms of biological role, inorganic pyrophosphate (PPi)-dependent phosphoenolpyruvate carboxykinase, which regulates the carbon flow of the central metabolism by fixing CO(2) to phosphoenolpyruvate to produce oxaloacetate. Can also produce pyruvate and diphosphate from phosphoenolpyruvate and phosphate. This Entamoeba histolytica (strain ATCC 30459 / HM-1:IMSS / ABRM) protein is PPi-type phosphoenolpyruvate carboxykinase 2.